Reading from the N-terminus, the 348-residue chain is Dihydroorotase (348 aa).

2 residues coordinate Zn(2+): His14 and His16. Residues 16 to 18 and Asn42 contribute to the substrate site; that span reads HLR. Residues Lys100, His137, and His175 each contribute to the Zn(2+) site. Lys100 is modified (N6-carboxylysine). His137 provides a ligand contact to substrate. Residue Leu220 coordinates substrate. Asp248 is a binding site for Zn(2+). Asp248 is a catalytic residue. Positions 252 and 264 each coordinate substrate.

Belongs to the metallo-dependent hydrolases superfamily. DHOase family. Class II DHOase subfamily. In terms of assembly, homodimer. Zn(2+) serves as cofactor.

It carries out the reaction (S)-dihydroorotate + H2O = N-carbamoyl-L-aspartate + H(+). It functions in the pathway pyrimidine metabolism; UMP biosynthesis via de novo pathway; (S)-dihydroorotate from bicarbonate: step 3/3. Functionally, catalyzes the reversible cyclization of carbamoyl aspartate to dihydroorotate. In Pseudomonas fluorescens (strain SBW25), this protein is Dihydroorotase.